We begin with the raw amino-acid sequence, 398 residues long: uncharacterized protein (398 aa).

This is an uncharacterized protein from Bacillus subtilis (strain 168).